Consider the following 91-residue polypeptide: Small ribosomal subunit protein uS17 (91 aa).

Belongs to the universal ribosomal protein uS17 family. Part of the 30S ribosomal subunit.

In terms of biological role, one of the primary rRNA binding proteins, it binds specifically to the 5'-end of 16S ribosomal RNA. The polypeptide is Small ribosomal subunit protein uS17 (Malacoplasma penetrans (strain HF-2) (Mycoplasma penetrans)).